A 97-amino-acid chain; its full sequence is Class II hydrophobin 3 (97 aa).

An N-terminal signal peptide occupies residues M1–A16. Intrachain disulfides connect C30–C79, C40–C70, C41–C53, and C80–C91.

This sequence belongs to the cerato-ulmin hydrophobin family. Homodimer. Homodimers further self-assemble to form highly ordered films at water-air interfaces through intermolecular interactions.

Its subcellular location is the secreted. It localises to the cell wall. In terms of biological role, aerial growth, conidiation, and dispersal of filamentous fungi in the environment rely upon a capability of their secreting small amphipathic proteins called hydrophobins (HPBs) with low sequence identity. Class I can self-assemble into an outermost layer of rodlet bundles on aerial cell surfaces, conferring cellular hydrophobicity that supports fungal growth, development and dispersal; whereas Class II form highly ordered films at water-air interfaces through intermolecular interactions but contribute nothing to the rodlet structure. In Trichoderma asperellum (strain ATCC 204424 / CBS 433.97 / NBRC 101777), this protein is Class II hydrophobin 3.